A 300-amino-acid polypeptide reads, in one-letter code: N-carbamoylputrescine amidase (300 aa).

The region spanning 8–266 (VTVAALQFAC…EAVLVAQFDL (259 aa)) is the CN hydrolase domain. The active-site Proton acceptor is the E47. Catalysis depends on K120, which acts as the Proton donor. C157 (nucleophile) is an active-site residue.

Belongs to the carbon-nitrogen hydrolase superfamily. Homooctamer.

It carries out the reaction N-carbamoylputrescine + H2O + 2 H(+) = putrescine + NH4(+) + CO2. It functions in the pathway amine and polyamine biosynthesis; putrescine biosynthesis via agmatine pathway; putrescine from N-carbamoylputrescine (amidase route): step 1/1. Involved in polyamine biosynthesis. This Solanum lycopersicum (Tomato) protein is N-carbamoylputrescine amidase (CPA).